The chain runs to 262 residues: Acetaldehyde dehydrogenase 7 (262 aa).

Position 10-13 (10-13 (SGNI)) interacts with NAD(+). C128 acts as the Acyl-thioester intermediate in catalysis. Residue 159 to 167 (SAGPGTRAN) coordinates NAD(+).

The protein belongs to the acetaldehyde dehydrogenase family.

The catalysed reaction is acetaldehyde + NAD(+) + CoA = acetyl-CoA + NADH + H(+). In Rhodococcus jostii (strain RHA1), this protein is Acetaldehyde dehydrogenase 7.